The chain runs to 449 residues: MASSKLAVIVLAAGMGTRMKSSLPKVMHPLAGRPMVSHLLDTVSGLSPDRMVVVVGPDMELVGKTVAPFPTVIQADRLGTGHAVLQAKAALGQFDGDVLVLYGDTPLITRATLERMLAERRGPRDPAVVVLGFKPQDPGHYGRLVVGAEGLKAIVEYRDATPDQRENPLCNSGVMAIDGNRLWSLIERVDNKNSKGEYYLTDIVALARADGATCTHVEGDEAELLGVNARSELAVAEALVQARLREAAMDNGATLIDPATVWFSWDTKIGRDVTIWPHVVFGPGVTVGDNVEIKGFCHFEGCMVEAGVAAGPFTRLRPGAEIGEGAHIGNFVEVKKATVEAGAKINHLAYVGDARVGAGANVGAGTITCNYDGFNKSFTDIGAGAFIGSNTSLVAPVKVGDGAVVGAGSVITKEVTPGALAVARGSQMELKGWAERFRAQQAAKKAKKD.

Positions 1-230 (MASSKLAVIV…EAELLGVNAR (230 aa)) are pyrophosphorylase. UDP-N-acetyl-alpha-D-glucosamine-binding positions include 11-14 (LAAG), K25, Q74, 79-80 (GT), 102-104 (YGD), G142, E156, N171, and N228. D104 lines the Mg(2+) pocket. N228 serves as a coordination point for Mg(2+). The tract at residues 231–251 (SELAVAEALVQARLREAAMDN) is linker. The segment at 252-449 (GATLIDPATV…QQAAKKAKKD (198 aa)) is N-acetyltransferase. Residues R317 and K335 each coordinate UDP-N-acetyl-alpha-D-glucosamine. The active-site Proton acceptor is the H347. The UDP-N-acetyl-alpha-D-glucosamine site is built by Y350 and N361. Acetyl-CoA is bound by residues A364, 370–371 (NY), S389, A407, and R424.

In the N-terminal section; belongs to the N-acetylglucosamine-1-phosphate uridyltransferase family. It in the C-terminal section; belongs to the transferase hexapeptide repeat family. As to quaternary structure, homotrimer. Requires Mg(2+) as cofactor.

It is found in the cytoplasm. The catalysed reaction is alpha-D-glucosamine 1-phosphate + acetyl-CoA = N-acetyl-alpha-D-glucosamine 1-phosphate + CoA + H(+). The enzyme catalyses N-acetyl-alpha-D-glucosamine 1-phosphate + UTP + H(+) = UDP-N-acetyl-alpha-D-glucosamine + diphosphate. The protein operates within nucleotide-sugar biosynthesis; UDP-N-acetyl-alpha-D-glucosamine biosynthesis; N-acetyl-alpha-D-glucosamine 1-phosphate from alpha-D-glucosamine 6-phosphate (route II): step 2/2. Its pathway is nucleotide-sugar biosynthesis; UDP-N-acetyl-alpha-D-glucosamine biosynthesis; UDP-N-acetyl-alpha-D-glucosamine from N-acetyl-alpha-D-glucosamine 1-phosphate: step 1/1. It participates in bacterial outer membrane biogenesis; LPS lipid A biosynthesis. Catalyzes the last two sequential reactions in the de novo biosynthetic pathway for UDP-N-acetylglucosamine (UDP-GlcNAc). The C-terminal domain catalyzes the transfer of acetyl group from acetyl coenzyme A to glucosamine-1-phosphate (GlcN-1-P) to produce N-acetylglucosamine-1-phosphate (GlcNAc-1-P), which is converted into UDP-GlcNAc by the transfer of uridine 5-monophosphate (from uridine 5-triphosphate), a reaction catalyzed by the N-terminal domain. The protein is Bifunctional protein GlmU of Paramagnetospirillum magneticum (strain ATCC 700264 / AMB-1) (Magnetospirillum magneticum).